A 325-amino-acid chain; its full sequence is Zinc finger C2HC domain-containing protein 1A (325 aa).

A C2HC/C3H-type 1 zinc finger spans residues 15-44; the sequence is ELLPCKICGRTFFPVALKKHGPICQKTATK. Positions 19, 22, 34, and 38 each coordinate Zn(2+). The segment at 43 to 83 is disordered; sequence TKKRKTFDSSRQRAEGTDIPTVKPLKPRPEPPKKPSNWRRK. Positions 48 to 58 are enriched in basic and acidic residues; it reads TFDSSRQRAEG. The C2HC/C3H-type 2 zinc finger occupies 118-147; it reads DYIQCPYCQRRFNENAADRHINFCKEQAAR. Positions 122, 125, 137, and 141 each coordinate Zn(2+). A disordered region spans residues 150 to 260; it reads NKGKFSTDTK…NPAPGVLTNK (111 aa). 2 stretches are compositionally biased toward low complexity: residues 177–188 and 197–216; these read SNSPGTASSGSS and GKTVVGVPSGKVSSSSSSLG. Ser223 is subject to Phosphoserine. A Phosphothreonine modification is found at Thr244. Ser292 carries the post-translational modification Phosphoserine.

This sequence belongs to the ZC2HC1 family. Requires Zn(2+) as cofactor.

The polypeptide is Zinc finger C2HC domain-containing protein 1A (ZC2HC1A) (Homo sapiens (Human)).